The chain runs to 437 residues: Purple acid phosphatase 18 (437 aa).

The signal sequence occupies residues Met1 to Ala23. Residues Asp148, Asp175, and Tyr178 each contribute to the Fe cation site. Asp175 is a Zn(2+) binding site. Residues Asn208 and His291 each contribute to the Zn(2+) site. Asn208 contacts substrate. The Proton donor role is filled by His301. Position 328 (His328) interacts with Zn(2+). Position 328–330 (His328–His330) interacts with substrate. Residue His330 participates in Fe cation binding. Residue Asn390 is glycosylated (N-linked (GlcNAc...) asparagine).

Belongs to the metallophosphoesterase superfamily. Purple acid phosphatase family. As to quaternary structure, homodimer. The cofactor is Fe cation. It depends on Zn(2+) as a cofactor. In terms of tissue distribution, expressed in roots, stems, leaves, flowers and siliques.

The protein localises to the secreted. The enzyme catalyses a phosphate monoester + H2O = an alcohol + phosphate. In Arabidopsis thaliana (Mouse-ear cress), this protein is Purple acid phosphatase 18 (PAP18).